The sequence spans 244 residues: 5-oxoprolinase subunit A (244 aa).

This sequence belongs to the LamB/PxpA family. As to quaternary structure, forms a complex composed of PxpA, PxpB and PxpC.

The enzyme catalyses 5-oxo-L-proline + ATP + 2 H2O = L-glutamate + ADP + phosphate + H(+). Catalyzes the cleavage of 5-oxoproline to form L-glutamate coupled to the hydrolysis of ATP to ADP and inorganic phosphate. The chain is 5-oxoprolinase subunit A from Salmonella dublin (strain CT_02021853).